Reading from the N-terminus, the 117-residue chain is Ribosome-binding factor A (117 aa).

It belongs to the RbfA family. Monomer. Binds 30S ribosomal subunits, but not 50S ribosomal subunits or 70S ribosomes.

The protein resides in the cytoplasm. Its function is as follows. One of several proteins that assist in the late maturation steps of the functional core of the 30S ribosomal subunit. Associates with free 30S ribosomal subunits (but not with 30S subunits that are part of 70S ribosomes or polysomes). Required for efficient processing of 16S rRNA. May interact with the 5'-terminal helix region of 16S rRNA. This is Ribosome-binding factor A from Leptospira interrogans serogroup Icterohaemorrhagiae serovar copenhageni (strain Fiocruz L1-130).